Consider the following 299-residue polypeptide: HTH-type transcriptional regulator CrgA (299 aa).

Residues 1-60 (MKTNSEELTVFVQVVESGSFSRAAEQLAMANSAVSRIVKRLEEKLGVNLLNRTTRQLSLT) form the HTH lysR-type domain. A DNA-binding region (H-T-H motif) is located at residues 20-39 (FSRAAEQLAMANSAVSRIVK).

This sequence belongs to the LysR transcriptional regulatory family. In terms of assembly, forms oligomers. Oligomerization is required for DNA binding.

Its function is as follows. Involved in the regulation of bacterial adhesion to host epithelial cells. May play a central regulatory role in meningococcal adhesion, particularly in switching from initial adhesion to intimate adhesion by downregulating the bacterial surface structures that hinder this adhesion. During intimate adhesion, negatively regulates the expression of pilC1, encoding a pilus-associated protein, pilE, encoding the pilin, and sia genes, encoding the capsule. Also negatively regulates its own expression. May also regulate other genes that are involved in intimate adhesion. Binds specifically to the promoter region of pilC1 and crgA (both harboring a CREN element), and pilE and sia (both devoid of a CREN element). Acts through interaction with RNA polymerase (RNAP). Interaction with RNAP leads to the production of short abortive transcripts, suggesting that CrgA may act by preventing RNAP from clearing the promoter. The sequence is that of HTH-type transcriptional regulator CrgA from Neisseria meningitidis serogroup C (strain 8013).